Reading from the N-terminus, the 188-residue chain is MSIKSDRWIRRMAAEHGMIEPFEAGQIKQAAGRSIVSYGTSSYGYDVRCASEFKLFTDINTTIVDPKAFDPNSFVEVKGDSCIIPPNSFALARTVEYFRIPRSVLTICLGKSTYARCGIIVNVTPLEPEWEGHVTLEFSNTTPLPARIYANEGVAQMLFLESDEVCETSYRDRGGKYQGQVGVTLPKI.

DCTP is bound by residues 111 to 116 (KSTYAR), 135 to 137 (TLE), Gln-156, Tyr-170, and Gln-180. The Proton donor/acceptor role is filled by Glu-137.

The protein belongs to the dCTP deaminase family. In terms of assembly, homotrimer.

The enzyme catalyses dCTP + H2O + H(+) = dUTP + NH4(+). The protein operates within pyrimidine metabolism; dUMP biosynthesis; dUMP from dCTP (dUTP route): step 1/2. Catalyzes the deamination of dCTP to dUTP. This Thiobacillus denitrificans (strain ATCC 25259 / T1) protein is dCTP deaminase.